Consider the following 177-residue polypeptide: Bifunctional protein PyrR (177 aa).

Positions 99–111 (VVLVDDVLYTGRT) match the PRPP-binding motif.

The protein belongs to the purine/pyrimidine phosphoribosyltransferase family. PyrR subfamily.

It carries out the reaction UMP + diphosphate = 5-phospho-alpha-D-ribose 1-diphosphate + uracil. Functionally, regulates the transcription of the pyrimidine nucleotide (pyr) operon in response to exogenous pyrimidines. Also displays a weak uracil phosphoribosyltransferase activity which is not physiologically significant. The chain is Bifunctional protein PyrR from Akkermansia muciniphila (strain ATCC BAA-835 / DSM 22959 / JCM 33894 / BCRC 81048 / CCUG 64013 / CIP 107961 / Muc).